Consider the following 282-residue polypeptide: Proteasome subunit beta (282 aa).

Residues 1–54 (MGSHRDLPAGMVNHIFTNSGISSFTEFVGSYAPDLLPGRNETLAAPVGDRIPHA) constitute a propeptide, removed in mature form; by autocatalysis. The active-site Nucleophile is the T55.

It belongs to the peptidase T1B family. The 20S proteasome core is composed of 14 alpha and 14 beta subunits that assemble into four stacked heptameric rings, resulting in a barrel-shaped structure. The two inner rings, each composed of seven catalytic beta subunits, are sandwiched by two outer rings, each composed of seven alpha subunits. The catalytic chamber with the active sites is on the inside of the barrel. Has a gated structure, the ends of the cylinder being occluded by the N-termini of the alpha-subunits. Is capped by the proteasome-associated ATPase, ARC.

It is found in the cytoplasm. It carries out the reaction Cleavage of peptide bonds with very broad specificity.. The protein operates within protein degradation; proteasomal Pup-dependent pathway. With respect to regulation, the formation of the proteasomal ATPase ARC-20S proteasome complex, likely via the docking of the C-termini of ARC into the intersubunit pockets in the alpha-rings, may trigger opening of the gate for substrate entry. Interconversion between the open-gate and close-gate conformations leads to a dynamic regulation of the 20S proteasome proteolysis activity. Functionally, component of the proteasome core, a large protease complex with broad specificity involved in protein degradation. In Streptosporangium roseum (strain ATCC 12428 / DSM 43021 / JCM 3005 / KCTC 9067 / NCIMB 10171 / NRRL 2505 / NI 9100), this protein is Proteasome subunit beta.